A 139-amino-acid chain; its full sequence is Putative nickel-responsive regulator (139 aa).

Residues His-79, His-90, His-92, and Cys-98 each coordinate Ni(2+).

Belongs to the transcriptional regulatory CopG/NikR family. Ni(2+) is required as a cofactor.

Functionally, transcriptional regulator. This chain is Putative nickel-responsive regulator, found in Geobacter sulfurreducens (strain ATCC 51573 / DSM 12127 / PCA).